Reading from the N-terminus, the 749-residue chain is Myosin-binding protein 2 (749 aa).

A helical transmembrane segment spans residues 17 to 37 (ITLILVYAFLEWSLIFFILLN). The disordered stretch occupies residues 164-184 (NLNDSQEETEEKKVPQSHEKL). The span at 173-184 (EEKKVPQSHEKL) shows a compositional bias: basic and acidic residues. One can recognise a GTD-binding domain in the interval 411-509 (LTVDKLKFEL…ELEKELEVYR (99 aa)). Positions 589–621 (ERLSILGRLKFLEEKLTDLNNEEDDEEEAKTFE) form a coiled coil. Positions 608–640 (NNEEDDEEEAKTFESNGSINGNEHIHGKETNGK) are disordered. A compositionally biased stretch (basic and acidic residues) spans 630–639 (EHIHGKETNG). A coiled-coil region spans residues 676-710 (DSEKGENVTIEEEVDELYERLEALEADREFLRHCV).

In terms of assembly, interacts with myosin XI-K and XI-1. Expressed in leaf epidermal cells, roots and root hairs.

The protein localises to the endomembrane system. In terms of biological role, membrane-anchored myosin receptors that define a distinct, plant-specific transport vesicle compartment. The protein is Myosin-binding protein 2 of Arabidopsis thaliana (Mouse-ear cress).